Reading from the N-terminus, the 85-residue chain is Turripeptide PaIAa (85 aa).

It belongs to the turripeptide family. As to expression, expressed by the venom duct.

The protein resides in the secreted. In terms of biological role, is lethal to drosophila larvae. The protein is Turripeptide PaIAa of Polystira albida (White giant-turris).